Reading from the N-terminus, the 161-residue chain is NADH:FMN oxidoreductase (161 aa).

Residues D30, 37–40, 54–61, A88, R94, and F151 contribute to the FMN site; these read AAST and CVQNSSTT.

This sequence belongs to the non-flavoprotein flavin reductase family.

It is found in the cytoplasm. It carries out the reaction FMNH2 + NAD(+) = FMN + NADH + 2 H(+). It catalyses the reaction FADH2 + NAD(+) = FAD + NADH + 2 H(+). It participates in sulfur metabolism; dibenzothiophene degradation. An NADH:FMN oxidoreductase which supplies reduced FMN for the '4S' desulfurization pathway that removes covalently bound sulfur from dibenzothiophene (DBT) without breaking carbon-carbon bonds. Can also use FAD. Provides DszC and probably also DszA (DBT-monooxygenase and DBTO2-monooxygenase respectively) with reduced flavin (FMN and/or FAD). This chain is NADH:FMN oxidoreductase, found in Mycolicibacterium goodii (Mycobacterium goodii).